Reading from the N-terminus, the 524-residue chain is Thioredoxin reductase 2, mitochondrial (524 aa).

Residues 1–36 constitute a mitochondrion transit peptide; the sequence is MAAMAVALRGLGGRFRWRTQAVAGGVRGAARGAAAG. Residue 41–70 coordinates FAD; it reads DLLVVGGGSGGLACAKEAAQLGRKVAVVDY. A disulfide bridge connects residues Cys86 and Cys91. N6-succinyllysine occurs at positions 175 and 329. Residue His497 is the Proton acceptor of the active site. The cysteinyl-selenocysteine (Cys-Sec) cross-link spans 522-523; the sequence is CU. A non-standard amino acid (selenocysteine) is located at residue Sec523.

This sequence belongs to the class-I pyridine nucleotide-disulfide oxidoreductase family. As to quaternary structure, homodimer. FAD serves as cofactor. In terms of tissue distribution, highly expressed in the prostate, ovary, liver, testis, uterus, colon and small intestine. Intermediate levels in brain, skeletal muscle, heart and spleen. Low levels in placenta, pancreas, thymus and peripheral blood leukocytes. According to PubMed:10608886, high levels in kidney, whereas according to PubMed:9923614, levels are low. High expression is observed in the adrenal cortex.

Its subcellular location is the mitochondrion. The enzyme catalyses [thioredoxin]-dithiol + NADP(+) = [thioredoxin]-disulfide + NADPH + H(+). Functionally, involved in the control of reactive oxygen species levels and the regulation of mitochondrial redox homeostasis. Maintains thioredoxin in a reduced state. May play a role in redox-regulated cell signaling. The sequence is that of Thioredoxin reductase 2, mitochondrial from Homo sapiens (Human).